The chain runs to 700 residues: Mitosis inducer protein blt1 (700 aa).

2 stretches are compositionally biased toward polar residues: residues 1–11 and 43–53; these read MSKSAFTSKSQ and PRSTALPNLSN. 2 disordered regions span residues 1–53 and 266–293; these read MSKS…NLSN and TNNR…SKDQ. Residues 273–284 are compositionally biased toward low complexity; that stretch reads GSDGSNSNFNGG. Residues 496–575 are a coiled coil; it reads SVALDDHNRQ…LNMLQKLSMQ (80 aa). Disordered stretches follow at residues 634–659 and 671–700; these read FSSF…RKPS and SSGS…SSKM. Serine 636 carries the post-translational modification Phosphoserine.

As to quaternary structure, interacts with cdr2, mid1 and sad1.

The protein localises to the cytoplasm. It is found in the cytoskeleton. Its function is as follows. At the onset of mitosis, forms a medial ring structure before the arrangement of the medial actin ring. Essential for the central positioning of the division septum before the cell divides. The protein is Mitosis inducer protein blt1 (blt1) of Schizosaccharomyces pombe (strain 972 / ATCC 24843) (Fission yeast).